The sequence spans 474 residues: L-arabinose isomerase (474 aa).

Mn(2+) contacts are provided by Glu306, Glu331, His348, and His447.

Belongs to the arabinose isomerase family. Mn(2+) is required as a cofactor.

The enzyme catalyses beta-L-arabinopyranose = L-ribulose. Its pathway is carbohydrate degradation; L-arabinose degradation via L-ribulose; D-xylulose 5-phosphate from L-arabinose (bacterial route): step 1/3. Catalyzes the conversion of L-arabinose to L-ribulose. This chain is L-arabinose isomerase, found in Lactiplantibacillus plantarum (strain ATCC BAA-793 / NCIMB 8826 / WCFS1) (Lactobacillus plantarum).